Here is a 249-residue protein sequence, read N- to C-terminus: Putative [LysW]-aminoadipate/[LysW]-glutamate kinase (249 aa).

Substrate is bound by residues Arg-63 and Asn-166.

Belongs to the acetylglutamate kinase family. LysZ subfamily.

The protein resides in the cytoplasm. It catalyses the reaction [amino-group carrier protein]-C-terminal-N-(1,4-dicarboxybutan-1-yl)-L-glutamine + ATP = [amino-group carrier protein]-C-terminal-N-(1-carboxy-5-phosphooxy-5-oxopentan-1-yl)-L-glutamine + ADP. It carries out the reaction [amino-group carrier protein]-C-terminal-gamma-(L-glutamyl)-L-glutamate + ATP = [amino-group carrier protein]-C-terminal-gamma-(5-phospho-L-glutamyl)-L-glutamate + ADP. It participates in amino-acid biosynthesis; L-lysine biosynthesis via AAA pathway; L-lysine from L-alpha-aminoadipate (Thermus route): step 2/5. Its pathway is amino-acid biosynthesis; L-arginine biosynthesis. In terms of biological role, involved in both the arginine and lysine biosynthetic pathways. Phosphorylates the LysW-bound precursors glutamate (for arginine biosynthesis), respectively alpha-aminoadipate (for lysine biosynthesis). In Pyrococcus furiosus (strain ATCC 43587 / DSM 3638 / JCM 8422 / Vc1), this protein is Putative [LysW]-aminoadipate/[LysW]-glutamate kinase.